Consider the following 183-residue polypeptide: UPF0397 protein stu0306/stu0307 (183 aa).

Helical transmembrane passes span 11–31 (ATGI…IPIF), 44–64 (VLFS…GFIG), 74–94 (GDIS…IGLF), 111–131 (IWFN…VTPI), and 149–169 (FVAG…LLAI).

Belongs to the UPF0397 family.

The protein resides in the cell membrane. This is UPF0397 protein stu0306/stu0307 from Streptococcus thermophilus (strain ATCC BAA-250 / LMG 18311).